The primary structure comprises 407 residues: Tyrosine--tRNA ligase (407 aa).

Residue Y35 participates in L-tyrosine binding. Residues 40–49 carry the 'HIGH' region motif; the sequence is PTADSLHVGH. Positions 168 and 172 each coordinate L-tyrosine. Residues 228–232 carry the 'KMSKS' region motif; that stretch reads KMGKT. K231 serves as a coordination point for ATP. The region spanning 341 to 405 is the S4 RNA-binding domain; the sequence is NLLVDLLVKC…RGKKNFNRIV (65 aa).

It belongs to the class-I aminoacyl-tRNA synthetase family. TyrS type 1 subfamily. In terms of assembly, homodimer.

Its subcellular location is the cytoplasm. It carries out the reaction tRNA(Tyr) + L-tyrosine + ATP = L-tyrosyl-tRNA(Tyr) + AMP + diphosphate + H(+). Catalyzes the attachment of tyrosine to tRNA(Tyr) in a two-step reaction: tyrosine is first activated by ATP to form Tyr-AMP and then transferred to the acceptor end of tRNA(Tyr). The protein is Tyrosine--tRNA ligase of Clostridium botulinum (strain Kyoto / Type A2).